Reading from the N-terminus, the 562-residue chain is Terpene synthase 2 (562 aa).

Residues D315, D319, D459, and E467 each contribute to the Mg(2+) site. The short motif at 315-319 is the DDXXD motif element; it reads DDEYD.

This sequence belongs to the terpene synthase family. Tpsa subfamily. Mg(2+) is required as a cofactor. It depends on Mn(2+) as a cofactor. In terms of tissue distribution, expressed at low levels in stems, leaves, roots and fruits.

The enzyme catalyses (2E,6E)-farnesyl diphosphate = delta-cadinene + diphosphate. It catalyses the reaction (2E,6E)-farnesyl diphosphate = alpha-cadinene + diphosphate. It carries out the reaction (2E,6E)-farnesyl diphosphate + H2O = (-)-delta-cadinol + diphosphate. It functions in the pathway secondary metabolite biosynthesis; terpenoid biosynthesis. In terms of biological role, sesquiterpene synthase involved in the biosynthesis of volatile compounds that contribute to the characteristic flavors of black pepper. Mediates the conversion of (2E,6E)-farnesyl diphosphate (FPP) into alpha-cadinene, delta-cadinene and delta-cadinol. This is Terpene synthase 2 from Piper nigrum (Black pepper).